The primary structure comprises 424 residues: MLDIKLFREEPNKIFDSEKKRFRDTINVEKVIEYDNLWREGLQNLNNLRSEKNKLSKSFKQAKKDGNLEEVISKSKKVASDIKELEPKIEEYERIRDEYRYKVGNIIDENVPVSDTEDDNEVIRTNGDFPSFDFEPLNHVDLINLIDGADTDTASQIAGSRFYYLKQDILFLNLALIQFALNELKDKGYTPLQTPFFIKSEVAEETSELGEFEETLYKVENEDLYLIATAEQTLAALHRNEIIDSEDLPLRYCALSTCFRKEAGSHGKDTLGIFRVHQFEKVEQFIYATPENSTLEHEKLLEVTEGIYQKLGLPYQIVAIVSSALNDNAAIKYDLEAWFPGSGTYRELVSCTNCKDYQARKINTRYGKAGAGDAQILHTLNSTAIATERTICCILENYQQEDGSIKIPDVLIPYMNGKTIIEAK.

229 to 231 (TAE) lines the L-serine pocket. ATP contacts are provided by residues 260-262 (RKE) and Val-276. Glu-283 is an L-serine binding site. 347-350 (ELVS) contacts ATP. Thr-383 lines the L-serine pocket.

This sequence belongs to the class-II aminoacyl-tRNA synthetase family. Type-1 seryl-tRNA synthetase subfamily. Homodimer. The tRNA molecule binds across the dimer.

It localises to the cytoplasm. The enzyme catalyses tRNA(Ser) + L-serine + ATP = L-seryl-tRNA(Ser) + AMP + diphosphate + H(+). The catalysed reaction is tRNA(Sec) + L-serine + ATP = L-seryl-tRNA(Sec) + AMP + diphosphate + H(+). It functions in the pathway aminoacyl-tRNA biosynthesis; selenocysteinyl-tRNA(Sec) biosynthesis; L-seryl-tRNA(Sec) from L-serine and tRNA(Sec): step 1/1. Catalyzes the attachment of serine to tRNA(Ser). Is also able to aminoacylate tRNA(Sec) with serine, to form the misacylated tRNA L-seryl-tRNA(Sec), which will be further converted into selenocysteinyl-tRNA(Sec). This chain is Serine--tRNA ligase, found in Methanosphaera stadtmanae (strain ATCC 43021 / DSM 3091 / JCM 11832 / MCB-3).